Here is a 725-residue protein sequence, read N- to C-terminus: ABC transporter G family member 7 (725 aa).

A helical membrane pass occupies residues Val-12–Val-34. One can recognise an ABC transporter domain in the interval Ile-70–Pro-316. Gly-108 to Thr-115 lines the ATP pocket. In terms of domain architecture, ABC transmembrane type-2 spans Arg-392–Phe-603. Transmembrane regions (helical) follow at residues Leu-446–Phe-466, Ile-493–Met-513, Gly-528–Val-548, and Ala-553–Val-573. The tract at residues Asn-676 to Leu-725 is disordered. Positions Asp-682–Lys-691 are enriched in basic and acidic residues.

It belongs to the ABC transporter superfamily. ABCG family. Eye pigment precursor importer (TC 3.A.1.204) subfamily.

The protein resides in the membrane. This Arabidopsis thaliana (Mouse-ear cress) protein is ABC transporter G family member 7 (ABCG7).